A 69-amino-acid polypeptide reads, in one-letter code: uncharacterized protein (69 aa).

The N-terminal stretch at 1 to 21 (MNTKFILILLVLIISTIFVNS) is a signal peptide.

The protein localises to the secreted. This is an uncharacterized protein from Dictyostelium discoideum (Social amoeba).